Here is a 131-residue protein sequence, read N- to C-terminus: uncharacterized protein (131 aa).

Low complexity predominate over residues 31-40 (AAATSRAAPL). Residues 31–131 (AAATSRAAPL…EAKTEQTKTP (101 aa)) form a disordered region.

This is an uncharacterized protein from Homo sapiens (Human).